A 356-amino-acid chain; its full sequence is Guanine nucleotide-binding protein alpha-2 subunit (356 aa).

G2 carries N-myristoyl glycine lipidation. C4 carries S-palmitoyl cysteine lipidation. Residues 32 to 356 (RTVKLLLLGA…QSNLHKSGLY (325 aa)) form the G-alpha domain. The segment at 35 to 48 (KLLLLGAGECGKST) is G1 motif. GTP contacts are provided by E43, G45, K46, S47, T48, D153, L178, T184, G206, N272, K273, D275, and A328. S47 is a binding site for Mg(2+). The segment at 176–184 (DTLLLRTKT) is G2 motif. Position 184 (T184) interacts with Mg(2+). The G3 motif stretch occupies residues 199 to 208 (FRVFDVGGQR). Residues 268 to 275 (ILFLNKKD) are G4 motif. The G5 motif stretch occupies residues 326 to 331 (TCATDT).

It belongs to the G-alpha family. G(q) subfamily. As to quaternary structure, g proteins are composed of 3 units; alpha, beta and gamma. The alpha chain contains the guanine nucleotide binding site. Mg(2+) is required as a cofactor.

Functionally, guanine nucleotide-binding proteins (G proteins) are involved as modulators or transducers in various transmembrane signaling systems. Involved in behavioral responses to P.aeruginosa by controlling the expression of daf-7, a member of the TGF-beta family, in ASJ sensory neurons. This Caenorhabditis elegans protein is Guanine nucleotide-binding protein alpha-2 subunit (gpa-2).